The primary structure comprises 199 residues: Thymidine kinase (199 aa).

ATP is bound by residues 9-16 (GAMSSGKS) and 93-96 (DEAQ). E94 acts as the Proton acceptor in catalysis. Residues C151, C154, C188, and H191 each contribute to the Zn(2+) site.

The protein belongs to the thymidine kinase family. In terms of assembly, homotetramer.

Its subcellular location is the cytoplasm. The catalysed reaction is thymidine + ATP = dTMP + ADP + H(+). This chain is Thymidine kinase, found in Lactobacillus johnsonii (strain CNCM I-12250 / La1 / NCC 533).